Consider the following 726-residue polypeptide: PWWP domain-containing protein 2 (726 aa).

Positions 1–10 are enriched in basic and acidic residues; sequence MSTESERIES. Positions 1-26 are disordered; the sequence is MSTESERIESVSEANASSLEVGNDQM. Residues 12 to 26 are compositionally biased toward polar residues; the sequence is SEANASSLEVGNDQM. A PWWP domain is found at 199 to 260; it reads DSDLVWAKVR…ASRIKPFRQH (62 aa). A disordered region spans residues 392-441; sequence APKISPAEEQSSLVEVSDPEPTKSKQVYTKRRKTNLQTEQSSLVEVSDPD. The span at 426-435 shows a compositional bias: polar residues; the sequence is NLQTEQSSLV. 2 short sequence motifs (nuclear localization signal) span residues 460 to 467 and 495 to 502; these read KKKEKTLA and KKRKVVQS. Disordered stretches follow at residues 472–545 and 568–726; these read EKRV…PQKA and TRLL…VSAE. The span at 494 to 512 shows a compositional bias: basic residues; it reads EKKRKVVQSKVPKSTKKIK. The span at 606–634 shows a compositional bias: polar residues; the sequence is SPSTTLSSPHAASVTKTTSGKSNSVSLDH. The span at 658-688 shows a compositional bias: basic and acidic residues; sequence LESRDLKDSSKEQVVHEDKKEAANVADEKSI.

The protein belongs to the PDP family. As to quaternary structure, interacts with DEK3. Binds to MSI4/FVE and MSI5. Component of the PRC2 (polycomb repressive complex 2) complex which regulates histone methylation on histone H3K27.

The protein resides in the nucleus. Together with PDP1, PDP3 and PDP6, interacts with MSI4/FVE and MSI5 to suppress FLC, MAF4 and MAF5 expression by regulating the function of the PRC2 complex and modulating H3K27me3 level, thereby promoting flowering. This is PWWP domain-containing protein 2 from Arabidopsis thaliana (Mouse-ear cress).